Consider the following 426-residue polypeptide: Glutamate-1-semialdehyde 2,1-aminomutase (426 aa).

An N6-(pyridoxal phosphate)lysine modification is found at Lys-265.

Belongs to the class-III pyridoxal-phosphate-dependent aminotransferase family. HemL subfamily. Homodimer. Requires pyridoxal 5'-phosphate as cofactor.

Its subcellular location is the cytoplasm. The catalysed reaction is (S)-4-amino-5-oxopentanoate = 5-aminolevulinate. The protein operates within porphyrin-containing compound metabolism; protoporphyrin-IX biosynthesis; 5-aminolevulinate from L-glutamyl-tRNA(Glu): step 2/2. This Escherichia coli O9:H4 (strain HS) protein is Glutamate-1-semialdehyde 2,1-aminomutase.